The primary structure comprises 160 residues: MKKKYKKVVVGGTFDRLHLGHKALLRKAFEVGEIVYIGLTSDEMIKEKQYSERILPYEKRLLDLIKFLEVNKYRNYRIMKIHNAIGFTTKIKSLEAIVVSEETYKGAVLVNKAREELGLRPLDIVVIPIIRSRLGCKISSSLIRAGLIDPFGNPIRREEK.

Belongs to the eukaryotic CoaD family.

It is found in the cytoplasm. The catalysed reaction is (R)-4'-phosphopantetheine + ATP + H(+) = 3'-dephospho-CoA + diphosphate. It participates in cofactor biosynthesis; coenzyme A biosynthesis. Its function is as follows. Reversibly transfers an adenylyl group from ATP to 4'-phosphopantetheine, yielding dephospho-CoA (dPCoA) and pyrophosphate. The protein is Phosphopantetheine adenylyltransferase of Pyrococcus furiosus (strain ATCC 43587 / DSM 3638 / JCM 8422 / Vc1).